A 328-amino-acid polypeptide reads, in one-letter code: Olfactory receptor 4A16 (328 aa).

The Extracellular portion of the chain corresponds to 1 to 23 (MRPSSNVTEFVLLGLTQDPDVKK). N-linked (GlcNAc...) asparagine glycosylation is present at Asn-6. A helical membrane pass occupies residues 24–47 (TLFVMFLLIYIVTMVGNLLIWVTT). At 48 to 55 (IGSPSLGS) the chain is on the cytoplasmic side. Residues 56 to 77 (LMYFFLAYLSLMDAIYSTAMSP) form a helical membrane-spanning segment. The Extracellular portion of the chain corresponds to 78–98 (KLMIDLLCDKIAISLSACMGQ). Cys-95 and Cys-187 are disulfide-bonded. Residues 99 to 118 (LFIEHLLGGAEVFLLVVMAY) form a helical membrane-spanning segment. The Cytoplasmic segment spans residues 119–137 (DRYVAISKPLHYLNIMNRL). A helical membrane pass occupies residues 138–156 (VCILLLVVAMIGGFVHSVV). Residues 157-193 (QIVFLYSLPICGPNVIDHSVCDMYPLLELLCLDTYFI) lie on the Extracellular side of the membrane. A helical transmembrane segment spans residues 194–217 (GLTVVANGGIICMVIFTFLLISCG). Residues 218–233 (VILNFLKTYSQEERHK) lie on the Cytoplasmic side of the membrane. The chain crosses the membrane as a helical span at residues 234-256 (ALPTCISHIIVVALVFVPCIFMY). Residues 257–267 (VRPVSNFPFDK) lie on the Extracellular side of the membrane. A helical transmembrane segment spans residues 268 to 287 (LMTVFYSIITLMLNPLIYSL). Residues 288–328 (RQSEMKNAMKNLWCEKLSIVRKRVSPTLNIFIPSSKATNRR) lie on the Cytoplasmic side of the membrane.

This sequence belongs to the G-protein coupled receptor 1 family.

The protein resides in the cell membrane. Odorant receptor. The sequence is that of Olfactory receptor 4A16 (OR4A16) from Homo sapiens (Human).